Here is a 357-residue protein sequence, read N- to C-terminus: Putative ABC transporter ATP-binding protein MG303 (357 aa).

The region spanning 72–312 is the ABC transporter domain; the sequence is LFFNNISVFV…TSWLMQYGIT (241 aa). 107-114 is an ATP binding site; sequence GESGSGKT.

It belongs to the ABC transporter superfamily.

The polypeptide is Putative ABC transporter ATP-binding protein MG303 (Mycoplasma genitalium (strain ATCC 33530 / DSM 19775 / NCTC 10195 / G37) (Mycoplasmoides genitalium)).